Reading from the N-terminus, the 179-residue chain is Adenine phosphoribosyltransferase (179 aa).

The protein belongs to the purine/pyrimidine phosphoribosyltransferase family. In terms of assembly, homodimer.

The protein localises to the cytoplasm. The catalysed reaction is AMP + diphosphate = 5-phospho-alpha-D-ribose 1-diphosphate + adenine. Its pathway is purine metabolism; AMP biosynthesis via salvage pathway; AMP from adenine: step 1/1. Functionally, catalyzes a salvage reaction resulting in the formation of AMP, that is energically less costly than de novo synthesis. This Bradyrhizobium sp. (strain ORS 278) protein is Adenine phosphoribosyltransferase.